Here is a 257-residue protein sequence, read N- to C-terminus: Deoxyribose-phosphate aldolase (257 aa).

D102 (proton donor/acceptor) is an active-site residue. The active-site Schiff-base intermediate with acetaldehyde is the K166. Catalysis depends on K198, which acts as the Proton donor/acceptor.

It belongs to the DeoC/FbaB aldolase family. DeoC type 2 subfamily.

It is found in the cytoplasm. The catalysed reaction is 2-deoxy-D-ribose 5-phosphate = D-glyceraldehyde 3-phosphate + acetaldehyde. Its pathway is carbohydrate degradation; 2-deoxy-D-ribose 1-phosphate degradation; D-glyceraldehyde 3-phosphate and acetaldehyde from 2-deoxy-alpha-D-ribose 1-phosphate: step 2/2. Functionally, catalyzes a reversible aldol reaction between acetaldehyde and D-glyceraldehyde 3-phosphate to generate 2-deoxy-D-ribose 5-phosphate. This Aeromonas salmonicida (strain A449) protein is Deoxyribose-phosphate aldolase.